Reading from the N-terminus, the 556-residue chain is Formate--tetrahydrofolate ligase (556 aa).

Residue 65-72 participates in ATP binding; sequence TPAGEGKT.

It belongs to the formate--tetrahydrofolate ligase family.

The enzyme catalyses (6S)-5,6,7,8-tetrahydrofolate + formate + ATP = (6R)-10-formyltetrahydrofolate + ADP + phosphate. The protein operates within one-carbon metabolism; tetrahydrofolate interconversion. This chain is Formate--tetrahydrofolate ligase, found in Peptoclostridium acidaminophilum (Eubacterium acidaminophilum).